Consider the following 348-residue polypeptide: D-amino-acid oxidase (348 aa).

Alanine 15, isoleucine 18, lysine 40, serine 52, glycine 56, and asparagine 58 together coordinate FAD. Residues tyrosine 232 and arginine 295 each coordinate (R)-lactate. Residues tyrosine 232 and arginine 295 each contribute to the anthranilate site. Arginine 295, serine 323, glycine 326, tyrosine 327, and glutamine 328 together coordinate FAD.

The protein belongs to the DAMOX/DASOX family. It depends on FAD as a cofactor.

It is found in the peroxisome. It catalyses the reaction a D-alpha-amino acid + O2 + H2O = a 2-oxocarboxylate + H2O2 + NH4(+). The enzyme catalyses D-serine + O2 + H2O = 3-hydroxypyruvate + H2O2 + NH4(+). The catalysed reaction is D-alanine + O2 + H2O = pyruvate + H2O2 + NH4(+). It carries out the reaction D-arginine + O2 + H2O = 5-guanidino-2-oxopentanoate + H2O2 + NH4(+). Its function is as follows. Catalyzes the oxidative deamination of D-amino acids with broad substrate specificity. Enables the organism to utilize D-amino acids as a source of nutrients. The chain is D-amino-acid oxidase from Schizosaccharomyces pombe (strain 972 / ATCC 24843) (Fission yeast).